Consider the following 459-residue polypeptide: Transmembrane protein 143 (459 aa).

The next 2 membrane-spanning stretches (helical) occupy residues 280 to 300 (LLNL…GMVV) and 301 to 321 (LTDL…FMGL). The residue at position 332 (serine 332) is a Phosphoserine. The segment at 435 to 459 (GFPKLDPVAPITSEPPQATPSSNIS) is disordered. Residues 448 to 459 (EPPQATPSSNIS) are compositionally biased toward polar residues.

The protein localises to the membrane. In Homo sapiens (Human), this protein is Transmembrane protein 143 (TMEM143).